The chain runs to 87 residues: Small ribosomal subunit protein bS20 (87 aa).

Residues 1 to 11 are compositionally biased toward basic residues; the sequence is MANIKSAKKRA. The interval 1–26 is disordered; it reads MANIKSAKKRAVQSEKRRQHNASQRS.

Belongs to the bacterial ribosomal protein bS20 family.

Functionally, binds directly to 16S ribosomal RNA. This is Small ribosomal subunit protein bS20 from Actinobacillus pleuropneumoniae serotype 5b (strain L20).